Here is a 200-residue protein sequence, read N- to C-terminus: Recombination protein RecR (200 aa).

Residues 58-73 (CSVCGNLTDTDPCFIC) form a C4-type zinc finger. One can recognise a Toprim domain in the interval 81–176 (DLLCVVERPR…SVTRIAHGLP (96 aa)).

It belongs to the RecR family.

May play a role in DNA repair. It seems to be involved in an RecBC-independent recombinational process of DNA repair. It may act with RecF and RecO. The chain is Recombination protein RecR from Pelotomaculum thermopropionicum (strain DSM 13744 / JCM 10971 / SI).